Reading from the N-terminus, the 835-residue chain is Protein translocase subunit SecA (835 aa).

Residues glutamine 85, 103-107 (GEGKT), and aspartate 492 each bind ATP. Residues 788–807 (VQGEAVHPSSDGEEAKKKPV) form a disordered region. Residues cysteine 819, cysteine 821, cysteine 830, and cysteine 831 each coordinate Zn(2+).

Belongs to the SecA family. In terms of assembly, monomer and homodimer. Part of the essential Sec protein translocation apparatus which comprises SecA, SecYEG and auxiliary proteins SecDF. Other proteins may also be involved. Zn(2+) serves as cofactor.

The protein localises to the cell membrane. It is found in the cytoplasm. The enzyme catalyses ATP + H2O + cellular proteinSide 1 = ADP + phosphate + cellular proteinSide 2.. In terms of biological role, part of the Sec protein translocase complex. Interacts with the SecYEG preprotein conducting channel. Has a central role in coupling the hydrolysis of ATP to the transfer of proteins into and across the cell membrane, serving as an ATP-driven molecular motor driving the stepwise translocation of polypeptide chains across the membrane. This is Protein translocase subunit SecA from Bacillus cereus (strain B4264).